Here is a 135-residue protein sequence, read N- to C-terminus: 6,7-dimethyl-8-ribityllumazine synthase (135 aa).

5-amino-6-(D-ribitylamino)uracil is bound by residues F12, 44-46 (AYD), and 68-70 (CVI). 73 to 74 (AT) lines the (2S)-2-hydroxy-3-oxobutyl phosphate pocket. Residue H76 is the Proton donor of the active site. L101 is a 5-amino-6-(D-ribitylamino)uracil binding site. R116 contributes to the (2S)-2-hydroxy-3-oxobutyl phosphate binding site.

This sequence belongs to the DMRL synthase family.

The catalysed reaction is (2S)-2-hydroxy-3-oxobutyl phosphate + 5-amino-6-(D-ribitylamino)uracil = 6,7-dimethyl-8-(1-D-ribityl)lumazine + phosphate + 2 H2O + H(+). It participates in cofactor biosynthesis; riboflavin biosynthesis; riboflavin from 2-hydroxy-3-oxobutyl phosphate and 5-amino-6-(D-ribitylamino)uracil: step 1/2. In terms of biological role, catalyzes the formation of 6,7-dimethyl-8-ribityllumazine by condensation of 5-amino-6-(D-ribitylamino)uracil with 3,4-dihydroxy-2-butanone 4-phosphate. This is the penultimate step in the biosynthesis of riboflavin. The chain is 6,7-dimethyl-8-ribityllumazine synthase from Methanoculleus marisnigri (strain ATCC 35101 / DSM 1498 / JR1).